A 647-amino-acid polypeptide reads, in one-letter code: MDSAVRPPVDAEEARRRRSTDCIYFLASPLTCKKGSECEYRHSDAARMNPRDCWYWFNGNCANPKCSFRHPPLDGLVGAPTTPRTSQQSAPQVSVPAQAPVPNPASGTAKQGVPCYYFQKGMCVKGDRCAFLHLPQATGSPAPQHTTKVFAPASVPHPQLKNSWTKPNSSAQQNAPPAIFDKPKDSAHNGKTAQKQNLTNRAGHSSGIIHDKKGSYMPSGVTKNYRPPPSTGDDLAENGVEMGEFVREPSPGSDVLTGGADDNTEQSLREDRGAYRRTNGEQHIGMLRQTHDSYGFERSHRGSAEKLLSESRFSQREPMPLTADSSDLRQRLLKQRRLNNPRSGQVSDRHNVYPEDERHDRHRQRGEEQASNDGVSSSRLRGRIRLPAETTFDRLGLQPEKERDRGPRARLSPPSQTDLRGKLHDRLKAKPNEDVSGNVQSSLSKANEDAESLNFAGPKSLAELKAKKVAGSLMKSSRSLTGPVRMTSEIVTIKDSSDPVLFDGPKPLNAILKRKREADSGNATDFGSKREEHSGGDEEGSQNDFRNIEDDIVGMNTEGNGEEAFQPEDDVVYGDSLSPADDIAAEAADDASRELEEQQDVETAEEYDYEMDDVNAAEENDYQEYEDEDDDLEDDDDFARKVGVMIT.

2 C3H1-type zinc fingers span residues 16 to 45 (RRRS…HSDA) and 47 to 73 (RMNP…HPPL). The interval 78-106 (GAPTTPRTSQQSAPQVSVPAQAPVPNPAS) is disordered. Residues 86 to 106 (SQQSAPQVSVPAQAPVPNPAS) show a composition bias toward low complexity. The C3H1-type 3 zinc finger occupies 109–136 (AKQGVPCYYFQKGMCVKGDRCAFLHLPQ). 5 disordered regions span residues 155-280 (VPHP…RTNG), 308-327 (LSES…DSSD), 335-452 (QRRL…DAES), 512-580 (LKRK…LSPA), and 586-605 (EAAD…ETAE). Composition is skewed to polar residues over residues 160 to 175 (LKNS…QQNA) and 189 to 203 (NGKT…NRAG). The segment covering 267 to 280 (SLREDRGAYRRTNG) has biased composition (basic and acidic residues). Over residues 347–359 (SDRHNVYPEDERH) the composition is skewed to basic and acidic residues. Residues 369–379 (QASNDGVSSSR) are compositionally biased toward polar residues. Residues 419 to 433 (LRGKLHDRLKAKPNE) are compositionally biased toward basic and acidic residues. The span at 435 to 445 (VSGNVQSSLSK) shows a compositional bias: polar residues. The span at 527-536 (GSKREEHSGG) shows a compositional bias: basic and acidic residues.

In Oryza sativa subsp. japonica (Rice), this protein is Zinc finger CCCH domain-containing protein 19.